We begin with the raw amino-acid sequence, 207 residues long: Transcriptional regulator GfcR (207 aa).

The protein belongs to the purine/pyrimidine phosphoribosyltransferase family. GfcR subfamily.

The polypeptide is Transcriptional regulator GfcR (Methanocella arvoryzae (strain DSM 22066 / NBRC 105507 / MRE50)).